The primary structure comprises 205 residues: Ribosomal RNA small subunit methyltransferase G (205 aa).

Residues glycine 76, leucine 81, 127–128 (IE), and arginine 140 contribute to the S-adenosyl-L-methionine site.

The protein belongs to the methyltransferase superfamily. RNA methyltransferase RsmG family.

The protein localises to the cytoplasm. The enzyme catalyses guanosine(527) in 16S rRNA + S-adenosyl-L-methionine = N(7)-methylguanosine(527) in 16S rRNA + S-adenosyl-L-homocysteine. Its function is as follows. Specifically methylates the N7 position of guanine in position 527 of 16S rRNA. The chain is Ribosomal RNA small subunit methyltransferase G from Francisella tularensis subsp. tularensis (strain FSC 198).